Here is a 156-residue protein sequence, read N- to C-terminus: 6,7-dimethyl-8-ribityllumazine synthase (156 aa).

Residues F22, 57-59 (AYE), and 81-83 (TVI) contribute to the 5-amino-6-(D-ribitylamino)uracil site. 86–87 (GT) serves as a coordination point for (2S)-2-hydroxy-3-oxobutyl phosphate. H89 functions as the Proton donor in the catalytic mechanism. Residue F114 coordinates 5-amino-6-(D-ribitylamino)uracil. Residue R128 participates in (2S)-2-hydroxy-3-oxobutyl phosphate binding.

The protein belongs to the DMRL synthase family. As to quaternary structure, forms an icosahedral capsid composed of 60 subunits, arranged as a dodecamer of pentamers.

It catalyses the reaction (2S)-2-hydroxy-3-oxobutyl phosphate + 5-amino-6-(D-ribitylamino)uracil = 6,7-dimethyl-8-(1-D-ribityl)lumazine + phosphate + 2 H2O + H(+). It participates in cofactor biosynthesis; riboflavin biosynthesis; riboflavin from 2-hydroxy-3-oxobutyl phosphate and 5-amino-6-(D-ribitylamino)uracil: step 1/2. In terms of biological role, catalyzes the formation of 6,7-dimethyl-8-ribityllumazine by condensation of 5-amino-6-(D-ribitylamino)uracil with 3,4-dihydroxy-2-butanone 4-phosphate. This is the penultimate step in the biosynthesis of riboflavin. The protein is 6,7-dimethyl-8-ribityllumazine synthase of Mannheimia succiniciproducens (strain KCTC 0769BP / MBEL55E).